A 150-amino-acid chain; its full sequence is Transthyretin (150 aa).

An N-terminal signal peptide occupies residues 1–20 (MASYRLLLLCLAGLVFVSEA). Position 30 is a sulfocysteine (Cys-30). Residue Lys-35 participates in L-thyroxine binding. At Glu-62 the chain carries 4-carboxyglutamate. Position 74 (Glu-74) interacts with L-thyroxine. A glycan (N-linked (GlcNAc...) asparagine) is linked at Asn-118. Residue Ser-137 coordinates L-thyroxine.

The protein belongs to the transthyretin family. Homotetramer. Dimer of dimers. In the homotetramer, subunits assemble around a central channel that can accommodate two ligand molecules. Interacts with RBP4. Sulfonation of the reactive cysteine Cys-30 enhances the stability of the native conformation of TTR, avoiding misassembly of the protein leading to amyloid formation. In terms of tissue distribution, detected in plasma and cerebrospinal fluid (at protein level). Highly expressed in the choroid plexus. Detected in liver.

The protein resides in the secreted. In terms of biological role, thyroid hormone-binding protein. Probably transports thyroxine from the bloodstream to the brain. In Sus scrofa (Pig), this protein is Transthyretin (TTR).